Reading from the N-terminus, the 358-residue chain is MTERGLRGESITREEALEILRSSDDELMSIIAAAGKVRRHFFDNRVRLNYLVNLKSGLCPEDCSYCSQRLGSRAEIMKYSWADPQKVHDAVEAGIAGGARRVCMVASGHGPSRRDVERVNGMVRSLKADHPDVEVCVCLGFVDDEKAASIKEAGADAYNHNANTARSHYGKICSTHSYEDRMDTVEVLKRNGLSPCSGVIAGMGETDEEFVDVIFDLRKHGVDSVPVNFLLPFEGTPLAGGAQHITPQWCLKRLAMVRFAHPDSEVRAAAGREQHIRTMQPLALEVVNSIFLGDYLTSEGAAGAADLQMIEDGGFIPEGADGQPMVHTDVNSHHSANLPVNAVPIRHRGIGTEVPANA.

A Radical SAM core domain is found at 44 to 272 (NRVRLNYLVN…DSEVRAAAGR (229 aa)). Residues Cys59, Cys63, and Cys66 each coordinate [4Fe-4S] cluster. Positions 103, 136, 196, and 267 each coordinate [2Fe-2S] cluster.

This sequence belongs to the radical SAM superfamily. Biotin synthase family. As to quaternary structure, homodimer. [4Fe-4S] cluster is required as a cofactor. It depends on [2Fe-2S] cluster as a cofactor.

The catalysed reaction is (4R,5S)-dethiobiotin + (sulfur carrier)-SH + 2 reduced [2Fe-2S]-[ferredoxin] + 2 S-adenosyl-L-methionine = (sulfur carrier)-H + biotin + 2 5'-deoxyadenosine + 2 L-methionine + 2 oxidized [2Fe-2S]-[ferredoxin]. Its pathway is cofactor biosynthesis; biotin biosynthesis; biotin from 7,8-diaminononanoate: step 2/2. Its function is as follows. Catalyzes the conversion of dethiobiotin (DTB) to biotin by the insertion of a sulfur atom into dethiobiotin via a radical-based mechanism. This chain is Biotin synthase, found in Cutibacterium acnes (strain DSM 16379 / KPA171202) (Propionibacterium acnes).